Consider the following 410-residue polypeptide: Imidazolonepropionase (410 aa).

Residues histidine 73 and histidine 75 each contribute to the Fe(3+) site. Histidine 73 and histidine 75 together coordinate Zn(2+). Positions 82, 145, and 178 each coordinate 4-imidazolone-5-propanoate. Tyrosine 145 contacts N-formimidoyl-L-glutamate. Histidine 243 provides a ligand contact to Fe(3+). Histidine 243 lines the Zn(2+) pocket. Glutamine 246 serves as a coordination point for 4-imidazolone-5-propanoate. Fe(3+) is bound at residue aspartate 318. Aspartate 318 contributes to the Zn(2+) binding site. Residues asparagine 320 and glycine 322 each coordinate N-formimidoyl-L-glutamate. Serine 323 provides a ligand contact to 4-imidazolone-5-propanoate.

Belongs to the metallo-dependent hydrolases superfamily. HutI family. Requires Zn(2+) as cofactor. It depends on Fe(3+) as a cofactor.

Its subcellular location is the cytoplasm. The enzyme catalyses 4-imidazolone-5-propanoate + H2O = N-formimidoyl-L-glutamate. Its pathway is amino-acid degradation; L-histidine degradation into L-glutamate; N-formimidoyl-L-glutamate from L-histidine: step 3/3. In terms of biological role, catalyzes the hydrolytic cleavage of the carbon-nitrogen bond in imidazolone-5-propanoate to yield N-formimidoyl-L-glutamate. It is the third step in the universal histidine degradation pathway. This chain is Imidazolonepropionase, found in Shewanella frigidimarina (strain NCIMB 400).